The following is a 71-amino-acid chain: MAILRAKEIRGMSDKELDKQLKDLRNDLLKQHAISATGGAPENPGRIRELRRTIARILTIKQEKKQKEMKR.

This sequence belongs to the universal ribosomal protein uL29 family.

The sequence is that of Large ribosomal subunit protein uL29 from Methanocella arvoryzae (strain DSM 22066 / NBRC 105507 / MRE50).